Consider the following 266-residue polypeptide: Probable catechol O-methyltransferase 1 (266 aa).

S-adenosyl-L-methionine-binding residues include Ile-56, Glu-78, Ser-86, Glu-106, Val-107, Ala-135, and Asp-162. Asp-162 provides a ligand contact to Mg(2+). A substrate-binding site is contributed by Lys-165. Mg(2+)-binding residues include Asp-190 and Asn-191. Position 191 (Asn-191) interacts with substrate.

Belongs to the class I-like SAM-binding methyltransferase superfamily. Cation-dependent O-methyltransferase family. Mg(2+) is required as a cofactor.

The protein resides in the cytoplasm. Its subcellular location is the nucleus. The catalysed reaction is a catechol + S-adenosyl-L-methionine = a guaiacol + S-adenosyl-L-homocysteine + H(+). This Schizosaccharomyces pombe (strain 972 / ATCC 24843) (Fission yeast) protein is Probable catechol O-methyltransferase 1.